Consider the following 227-residue polypeptide: Uracil-DNA glycosylase (227 aa).

D68 functions as the Proton acceptor in the catalytic mechanism.

The protein belongs to the uracil-DNA glycosylase (UDG) superfamily. UNG family.

It is found in the cytoplasm. It carries out the reaction Hydrolyzes single-stranded DNA or mismatched double-stranded DNA and polynucleotides, releasing free uracil.. In terms of biological role, excises uracil residues from the DNA which can arise as a result of misincorporation of dUMP residues by DNA polymerase or due to deamination of cytosine. This is Uracil-DNA glycosylase from Mycobacterium leprae (strain Br4923).